Reading from the N-terminus, the 61-residue chain is MSDKKLKITQVRSIIGGTKKQKATIQALGLGRPHYTVERKDNPCTRGQIRVVQHLVKVEEV.

Belongs to the universal ribosomal protein uL30 family. As to quaternary structure, part of the 50S ribosomal subunit.

The sequence is that of Large ribosomal subunit protein uL30 from Chlorobium luteolum (strain DSM 273 / BCRC 81028 / 2530) (Pelodictyon luteolum).